We begin with the raw amino-acid sequence, 976 residues long: Vacuolar membrane protease (976 aa).

Over 1–15 (MKLKSVFRSVLKYRK) the chain is Cytoplasmic. The helical transmembrane segment at 16 to 36 (TNLSLLLLITYSIITLLYIFD) threads the bilayer. The Vacuolar segment spans residues 37 to 359 (HERYKLNLPK…KFFVISAKTL (323 aa)). N96 and N121 each carry an N-linked (GlcNAc...) asparagine glycan. H156 and D168 together coordinate Zn(2+). N-linked (GlcNAc...) asparagine glycosylation is present at N189. The active-site Proton acceptor is the E200. E201 contributes to the Zn(2+) binding site. N-linked (GlcNAc...) asparagine glycans are attached at residues N212 and N217. The Zn(2+) site is built by E226 and H300. The helical transmembrane segment at 360 to 380 (FYWNCIFLLVSPVVAIGLYLI) threads the bilayer. Residues 381–392 (SRDRMTWKSHSW) lie on the Cytoplasmic side of the membrane. The helical transmembrane segment at 393 to 412 (LSWTRFPLSLAAGIIVQKLF) threads the bilayer. Topologically, residues 413–428 (SNDIIRSNPLTFSRNY) are vacuolar. The chain crosses the membrane as a helical span at residues 429–449 (FWPISAFFTQVIFTSYVLINC). Residues 450 to 461 (SNFFFPCADMKS) are Cytoplasmic-facing. The chain crosses the membrane as a helical span at residues 462–482 (LSIIELFIILWTILLFTSKLL). Residues 483–496 (YSSDYRYTGLYPLS) are Vacuolar-facing. A helical membrane pass occupies residues 497–517 (IFFLLSTIAAILRLLALALGM). Residues 518-627 (RTRKRLGREC…NSLKLEYTDY (110 aa)) lie on the Cytoplasmic side of the membrane. A disordered region spans residues 528 to 610 (RDHHSNYSSH…PLLKGSNSME (83 aa)). A compositionally biased stretch (polar residues) spans 549 to 558 (NLEQPQDQFT). Positions 559–570 (SSQDDQASIQDD) are enriched in low complexity. Positions 582–601 (NVDEDHGMDSSSQQHDERVP) are enriched in basic and acidic residues. Residues 628–648 (AWIIQFLLIVPIPSFILFNSV) form a helical membrane-spanning segment. At 649-668 (DVIMDALNHTVQEGSKATFD) the chain is on the vacuolar side. N656 is a glycosylation site (N-linked (GlcNAc...) asparagine). Residues 669 to 689 (VLRFGMVGSILIALPILPFFY) form a helical membrane-spanning segment. Topologically, residues 690–692 (KVN) are cytoplasmic. The helical transmembrane segment at 693-713 (YITISLTALLFLISASKTLLV) threads the bilayer. Residues 714-976 (HPFTNSNPLK…LVIVKDAIIL (263 aa)) lie on the Vacuolar side of the membrane. Residues N768, N796, N811, N866, and N937 are each glycosylated (N-linked (GlcNAc...) asparagine).

This sequence belongs to the peptidase M28 family. Zn(2+) is required as a cofactor.

The protein localises to the vacuole membrane. Functionally, may be involved in vacuolar sorting and osmoregulation. In Saccharomyces cerevisiae (strain JAY291) (Baker's yeast), this protein is Vacuolar membrane protease.